Consider the following 652-residue polypeptide: ATP-dependent zinc metalloprotease FtsH (652 aa).

Residues 1–11 (MKKQNNGLIKN) are Cytoplasmic-facing. A helical membrane pass occupies residues 12–32 (PFLWLLFIFFLVTGFQYFYSG). At 33–131 (NNSGGSQQIN…EVTVKHESSS (99 aa)) the chain is on the extracellular side. The helical transmembrane segment at 132–152 (GIWINLLVSIVPFGILFFFLF) threads the bilayer. Residues 153-652 (SMMGNMGGGN…EVKSKMNDEK (500 aa)) are Cytoplasmic-facing. ATP is bound at residue 227–234 (GPPGTGKT). H449 provides a ligand contact to Zn(2+). Residue E450 is part of the active site. Zn(2+) is bound by residues H453 and D525. Positions 628–652 (MPEAVEEESHALSYDEVKSKMNDEK) are disordered. Residues 634 to 652 (EESHALSYDEVKSKMNDEK) are compositionally biased toward basic and acidic residues.

This sequence in the central section; belongs to the AAA ATPase family. In the C-terminal section; belongs to the peptidase M41 family. In terms of assembly, homohexamer. It depends on Zn(2+) as a cofactor.

Its subcellular location is the cell membrane. Its function is as follows. Acts as a processive, ATP-dependent zinc metallopeptidase for both cytoplasmic and membrane proteins. Plays a role in the quality control of integral membrane proteins. This Streptococcus pneumoniae (strain ATCC BAA-255 / R6) protein is ATP-dependent zinc metalloprotease FtsH.